We begin with the raw amino-acid sequence, 499 residues long: Acetylcholine receptor subunit alpha-type acr-16 (499 aa).

Positions M1–G19 are cleaved as a signal peptide. At S20–Y232 the chain is on the extracellular side. 2 N-linked (GlcNAc...) asparagine glycosylation sites follow: N43 and N93. 2 cysteine pairs are disulfide-bonded: C147–C161 and C211–C212. Transmembrane regions (helical) follow at residues G233–L253, I261–M281, and V289–F309. Topologically, residues T310–R473 are cytoplasmic. A helical transmembrane segment spans residues L474–A494. Residues P495 to A499 are Extracellular-facing.

Belongs to the ligand-gated ion channel (TC 1.A.9) family. Acetylcholine receptor (TC 1.A.9.1) subfamily.

It is found in the postsynaptic cell membrane. The protein localises to the cell membrane. Its function is as follows. After binding acetylcholine, the AChR responds by an extensive change in conformation that affects all subunits and leads to opening of an ion-conducting channel across the plasma membrane. A subunit of the levamisole-insensitive nicotinic receptor. This chain is Acetylcholine receptor subunit alpha-type acr-16, found in Caenorhabditis briggsae.